A 127-amino-acid polypeptide reads, in one-letter code: S-adenosylmethionine decarboxylase proenzyme 2 (127 aa).

The active-site Schiff-base intermediate with substrate; via pyruvic acid is the S63. At S63 the chain carries Pyruvic acid (Ser); by autocatalysis. H68 functions as the Proton acceptor; for processing activity in the catalytic mechanism. The Proton donor; for catalytic activity role is filled by C83.

It belongs to the prokaryotic AdoMetDC family. Type 1 subfamily. In terms of assembly, heterotetramer of two alpha and two beta chains arranged as a dimer of alpha/beta heterodimers. It depends on pyruvate as a cofactor. Is synthesized initially as an inactive proenzyme. Formation of the active enzyme involves a self-maturation process in which the active site pyruvoyl group is generated from an internal serine residue via an autocatalytic post-translational modification. Two non-identical subunits are generated from the proenzyme in this reaction, and the pyruvate is formed at the N-terminus of the alpha chain, which is derived from the carboxyl end of the proenzyme. The post-translation cleavage follows an unusual pathway, termed non-hydrolytic serinolysis, in which the side chain hydroxyl group of the serine supplies its oxygen atom to form the C-terminus of the beta chain, while the remainder of the serine residue undergoes an oxidative deamination to produce ammonia and the pyruvoyl group blocking the N-terminus of the alpha chain.

The catalysed reaction is S-adenosyl-L-methionine + H(+) = S-adenosyl 3-(methylsulfanyl)propylamine + CO2. The protein operates within amine and polyamine biosynthesis; S-adenosylmethioninamine biosynthesis; S-adenosylmethioninamine from S-adenosyl-L-methionine: step 1/1. In terms of biological role, catalyzes the decarboxylation of S-adenosylmethionine to S-adenosylmethioninamine (dcAdoMet), the propylamine donor required for the synthesis of the polyamines spermine and spermidine from the diamine putrescine. This chain is S-adenosylmethionine decarboxylase proenzyme 2, found in Halalkalibacterium halodurans (strain ATCC BAA-125 / DSM 18197 / FERM 7344 / JCM 9153 / C-125) (Bacillus halodurans).